The chain runs to 521 residues: Cytochrome P450 1A1 (521 aa).

A substrate-binding site is contributed by Phe-229. Cys-463 contacts heme.

The protein belongs to the cytochrome P450 family. It depends on heme as a cofactor.

The protein resides in the endoplasmic reticulum membrane. Its subcellular location is the microsome membrane. It catalyses the reaction an organic molecule + reduced [NADPH--hemoprotein reductase] + O2 = an alcohol + oxidized [NADPH--hemoprotein reductase] + H2O + H(+). Its function is as follows. Cytochromes P450 are a group of heme-thiolate monooxygenases. They oxidize a variety of structurally unrelated compounds, including steroids, fatty acids, and xenobiotics. The protein is Cytochrome P450 1A1 (cyp1a1) of Chelon auratus (Golden grey mullet).